The chain runs to 365 residues: Carbamoyl phosphate synthase small chain (365 aa).

2 CPSase regions span residues 1–166 (MKRQ…PSPG) and 1–169 (MKRQ…GRGH). L-glutamine-binding residues include Ser-45, Gly-218, and Gly-220. In terms of domain architecture, Glutamine amidotransferase type-1 spans 170 to 357 (RVVLVDFGMK…LTMIENFKKE (188 aa)). Cys-245 serves as the catalytic Nucleophile. L-glutamine contacts are provided by Leu-246, Gln-249, Asn-287, Gly-289, and Tyr-290. Active-site residues include His-330 and Glu-332.

This sequence belongs to the CarA family. Composed of two chains; the small (or glutamine) chain promotes the hydrolysis of glutamine to ammonia, which is used by the large (or ammonia) chain to synthesize carbamoyl phosphate. Tetramer of heterodimers (alpha,beta)4.

It carries out the reaction hydrogencarbonate + L-glutamine + 2 ATP + H2O = carbamoyl phosphate + L-glutamate + 2 ADP + phosphate + 2 H(+). The enzyme catalyses L-glutamine + H2O = L-glutamate + NH4(+). Its pathway is amino-acid biosynthesis; L-arginine biosynthesis; carbamoyl phosphate from bicarbonate: step 1/1. It functions in the pathway pyrimidine metabolism; UMP biosynthesis via de novo pathway; (S)-dihydroorotate from bicarbonate: step 1/3. Functionally, small subunit of the glutamine-dependent carbamoyl phosphate synthetase (CPSase). CPSase catalyzes the formation of carbamoyl phosphate from the ammonia moiety of glutamine, carbonate, and phosphate donated by ATP, constituting the first step of 2 biosynthetic pathways, one leading to arginine and/or urea and the other to pyrimidine nucleotides. The small subunit (glutamine amidotransferase) binds and cleaves glutamine to supply the large subunit with the substrate ammonia. The sequence is that of Carbamoyl phosphate synthase small chain from Bacillus cereus (strain ATCC 14579 / DSM 31 / CCUG 7414 / JCM 2152 / NBRC 15305 / NCIMB 9373 / NCTC 2599 / NRRL B-3711).